The primary structure comprises 180 residues: Adenine phosphoribosyltransferase (180 aa).

This sequence belongs to the purine/pyrimidine phosphoribosyltransferase family. As to quaternary structure, homodimer.

Its subcellular location is the cytoplasm. The enzyme catalyses AMP + diphosphate = 5-phospho-alpha-D-ribose 1-diphosphate + adenine. It functions in the pathway purine metabolism; AMP biosynthesis via salvage pathway; AMP from adenine: step 1/1. Catalyzes a salvage reaction resulting in the formation of AMP, that is energically less costly than de novo synthesis. The chain is Adenine phosphoribosyltransferase from Sinorhizobium medicae (strain WSM419) (Ensifer medicae).